A 144-amino-acid polypeptide reads, in one-letter code: UPF0102 protein BURPS1106A_3900 (144 aa).

A disordered region spans residues methionine 1 to serine 28.

It belongs to the UPF0102 family.

The protein is UPF0102 protein BURPS1106A_3900 of Burkholderia pseudomallei (strain 1106a).